The chain runs to 295 residues: Ribosomal RNA small subunit methyltransferase A (295 aa).

S-adenosyl-L-methionine-binding residues include Asn29, Leu31, Gly56, Glu77, Asp102, and Asn128.

This sequence belongs to the class I-like SAM-binding methyltransferase superfamily. rRNA adenine N(6)-methyltransferase family. RsmA subfamily.

The protein resides in the cytoplasm. The enzyme catalyses adenosine(1518)/adenosine(1519) in 16S rRNA + 4 S-adenosyl-L-methionine = N(6)-dimethyladenosine(1518)/N(6)-dimethyladenosine(1519) in 16S rRNA + 4 S-adenosyl-L-homocysteine + 4 H(+). Specifically dimethylates two adjacent adenosines (A1518 and A1519) in the loop of a conserved hairpin near the 3'-end of 16S rRNA in the 30S particle. May play a critical role in biogenesis of 30S subunits. This chain is Ribosomal RNA small subunit methyltransferase A, found in Listeria monocytogenes serotype 4b (strain CLIP80459).